A 493-amino-acid chain; its full sequence is MNNFVILPILIPLLSAILLIFMTKNLMLMRIFSTAASAIGIVISGILVQTVFTKGIQTLSLGGWKAPYGIVLAADQFASLLVLTTAIIGLLVGLYSFRSVGEKRERSFYYSGVQFLLAGVSGAFLTGDLFNMYVFFELLLIASYMLIVLGGTKIQLRESLKYIVFNIVSSALFVIGVGFLYAVTGTLNMADLSVKISESGQTGLITVIGVLLLLVFGMKGGIFPLYFWLPGSYYAPPAAISALFGALLTKVGLYAITRVFTLIFIHDTAFTHQLMIWLAALTVIFGVIGSLAYSNVMKIVIYNIITAVGVILFGVAVHTPASIQGAIYYLIHDMLIKGALFMLAGTLIALTGTASLHKMGGLIKRYPVLGWMFFISAISLAGIPPLSGFVGKFKIAEGGFAEGEFTISMLILLSSLLVLYSVLRIFIHAFWGEEKETPKPNHRTAKGLLYPAAIFLLLSLLFGLGTEWVSPYVDQAAETLLNPEKYIEAVLKE.

A run of 15 helical transmembrane segments spans residues asparagine 3 to threonine 23, isoleucine 31 to valine 51, phenylalanine 77 to phenylalanine 97, serine 107 to glycine 127, leucine 129 to leucine 149, isoleucine 163 to valine 183, glycine 203 to phenylalanine 223, phenylalanine 227 to leucine 247, valine 251 to threonine 271, leucine 274 to serine 294, isoleucine 299 to threonine 319, leucine 330 to leucine 350, glycine 370 to valine 390, isoleucine 407 to isoleucine 427, and leucine 449 to valine 469.

Belongs to the CPA3 antiporters (TC 2.A.63) subunit D family. In terms of assembly, forms a heterooligomeric complex that consists of seven subunits: MrpA, MrpB, MrpC, MrpD, MrpE, MrpF and MrpG.

Its subcellular location is the cell membrane. Functionally, mrp complex is a Na(+)/H(+) antiporter that is considered to be the major Na(+) excretion system in B.subtilis. Has a major role in Na(+) resistance and a minor role in Na(+)- and K(+)-dependent pH homeostasis as compared to TetB. MrpA may be the actual Na(+)/H(+) antiporter, although the six other Mrp proteins are all required for Na(+)/H(+) antiport activity and Na(+) resistance. MrpA is required for initiation of sporulation when external Na(+) concentration increases. Also transports Li(+) but not K(+), Ca(2+) or Mg(2+). The chain is Na(+)/H(+) antiporter subunit D (mrpD) from Bacillus subtilis (strain 168).